We begin with the raw amino-acid sequence, 454 residues long: Mannosylfructose-phosphate synthase (454 aa).

This sequence belongs to the glycosyltransferase 1 family. Mg(2+) serves as cofactor. It depends on Mn(2+) as a cofactor.

The enzyme catalyses beta-D-fructose 6-phosphate + GDP-alpha-D-mannose = beta-D-fructofuranosyl alpha-D-mannopyranoside 6(F)-phosphate + GDP + H(+). Its pathway is carbohydrate metabolism; mannosylfructose biosynthesis; beta-D-fructofuranosyl alpha-D-mannopyranoside from D-fructose 6-phosphate and GDP-alpha-D-mannose: step 1/2. The polypeptide is Mannosylfructose-phosphate synthase (Agrobacterium fabrum (strain C58 / ATCC 33970) (Agrobacterium tumefaciens (strain C58))).